We begin with the raw amino-acid sequence, 109 residues long: Class I hydrophobin dewE (109 aa).

The N-terminal stretch at 1–20 (MKVATALSVLAVAGSALASA) is a signal peptide. 4 disulfides stabilise this stretch: Cys34–Cys87, Cys40–Cys81, Cys41–Cys74, and Cys88–Cys102.

Belongs to the fungal hydrophobin family. In terms of assembly, self-assembles to form functional amyloid fibrils called rodlets. Self-assembly into fibrillar rodlets occurs spontaneously at hydrophobic:hydrophilic interfaces and the rodlets further associate laterally to form amphipathic monolayers.

The protein localises to the secreted. Its subcellular location is the spore wall. Aerial growth, conidiation, and dispersal of filamentous fungi in the environment rely upon a capability of their secreting small amphipathic proteins called hydrophobins (HPBs) with low sequence identity. Class I can self-assemble into an outermost layer of rodlet bundles on aerial cell surfaces, conferring cellular hydrophobicity that supports fungal growth, development and dispersal; whereas Class II form highly ordered films at water-air interfaces through intermolecular interactions but contribute nothing to the rodlet structure. DewE is a class I hydrophobin that contributes to the hydrophobicity of the spore surface. The protein is Class I hydrophobin dewE of Emericella nidulans (strain FGSC A4 / ATCC 38163 / CBS 112.46 / NRRL 194 / M139) (Aspergillus nidulans).